The chain runs to 106 residues: UPF0145 protein Pput_2816 (106 aa).

This sequence belongs to the UPF0145 family.

In Pseudomonas putida (strain ATCC 700007 / DSM 6899 / JCM 31910 / BCRC 17059 / LMG 24140 / F1), this protein is UPF0145 protein Pput_2816.